The chain runs to 158 residues: HVA22-like protein f (158 aa).

The next 3 membrane-spanning stretches (helical) occupy residues 2–22 (GFII…VMLL), 41–61 (QQWL…LSVW), and 63–83 (VLAW…WLVL).

This sequence belongs to the DP1 family.

The protein resides in the membrane. The protein is HVA22-like protein f (HVA22F) of Arabidopsis thaliana (Mouse-ear cress).